Reading from the N-terminus, the 149-residue chain is Cytochrome c oxidase subunit 5A, mitochondrial (149 aa).

This sequence belongs to the cytochrome c oxidase subunit 5A family. In terms of assembly, component of the cytochrome c oxidase (complex IV, CIV), a multisubunit enzyme composed of a catalytic core of 3 subunits and several supernumerary subunits. The complex exists as a monomer or a dimer and forms supercomplexes (SCs) in the inner mitochondrial membrane with ubiquinol-cytochrome c oxidoreductase (cytochrome b-c1 complex, complex III, CIII).

It localises to the mitochondrion inner membrane. It participates in energy metabolism; oxidative phosphorylation. Component of the cytochrome c oxidase, the last enzyme in the mitochondrial electron transport chain which drives oxidative phosphorylation. The respiratory chain contains 3 multisubunit complexes succinate dehydrogenase (complex II, CII), ubiquinol-cytochrome c oxidoreductase (cytochrome b-c1 complex, complex III, CIII) and cytochrome c oxidase (complex IV, CIV), that cooperate to transfer electrons derived from NADH and succinate to molecular oxygen, creating an electrochemical gradient over the inner membrane that drives transmembrane transport and the ATP synthase. Cytochrome c oxidase is the component of the respiratory chain that catalyzes the reduction of oxygen to water. Electrons originating from reduced cytochrome c in the intermembrane space (IMS) are transferred via the dinuclear copper A center (CU(A)) of subunit 2 and heme A of subunit 1 to the active site in subunit 1, a binuclear center (BNC) formed by heme A3 and copper B (CU(B)). The BNC reduces molecular oxygen to 2 water molecules using 4 electrons from cytochrome c in the IMS and 4 protons from the mitochondrial matrix. The chain is Cytochrome c oxidase subunit 5A, mitochondrial from Drosophila melanogaster (Fruit fly).